Consider the following 317-residue polypeptide: MGDRIKILTGNAHRELASEISDDLNLALGKAHVGKFSNGETSVMISESIRDMDVYIIQPTCNPNVNDNLMELLIMADAIRRASAHRITAVIPCFGYARQDKKDKSRAPITGKLVANLIETAGIDRVITMDLHASQIQGFFNIPVDNLYAEPQIIKYIRKYIPGEKVIVSPDAGGVKRAKSISDKLDADLAIIHKERKKANEVSGMILVGDVKDKVALIVDDMADTCGTLVSACEMLISKGATKVYALVTHGVLSGDAIQKLNESSLTELVITNTIPHAEKAAKCPKIKTINIAHTLSEAIRRTHHGESISSLFSDTK.

The Mg(2+) site is built by Asp-130, His-132, and Asp-145. The binding of phosphoribosylpyrophosphate stretch occupies residues 212 to 227 (KDKVALIVDDMADTCG).

Belongs to the ribose-phosphate pyrophosphokinase family. Mg(2+) serves as cofactor.

It catalyses the reaction D-ribose 5-phosphate + ATP = 5-phospho-alpha-D-ribose 1-diphosphate + AMP + H(+). It functions in the pathway metabolic intermediate biosynthesis; 5-phospho-alpha-D-ribose 1-diphosphate biosynthesis; 5-phospho-alpha-D-ribose 1-diphosphate from D-ribose 5-phosphate (route I): step 1/1. This is Ribose-phosphate pyrophosphokinase A (prsA) from Dictyostelium discoideum (Social amoeba).